We begin with the raw amino-acid sequence, 344 residues long: Dihydroorotate dehydrogenase (quinone) (344 aa).

FMN is bound by residues 65–69 (AGFDK) and Thr89. Substrate is bound at residue Lys69. 114 to 118 (NRMGF) serves as a coordination point for substrate. The FMN site is built by Asn145 and Asn178. Asn178 contacts substrate. Ser181 (nucleophile) is an active-site residue. Asn183 contributes to the substrate binding site. Positions 215 and 243 each coordinate FMN. Substrate is bound at residue 244–245 (NT). FMN-binding positions include Gly269, Gly298, and 319–320 (YT).

The protein belongs to the dihydroorotate dehydrogenase family. Type 2 subfamily. Monomer. It depends on FMN as a cofactor.

Its subcellular location is the cell membrane. The enzyme catalyses (S)-dihydroorotate + a quinone = orotate + a quinol. It participates in pyrimidine metabolism; UMP biosynthesis via de novo pathway; orotate from (S)-dihydroorotate (quinone route): step 1/1. In terms of biological role, catalyzes the conversion of dihydroorotate to orotate with quinone as electron acceptor. The protein is Dihydroorotate dehydrogenase (quinone) of Clavibacter sepedonicus (Clavibacter michiganensis subsp. sepedonicus).